Here is a 1303-residue protein sequence, read N- to C-terminus: Serine/threonine-protein kinase ULK4 (1303 aa).

One can recognise a Protein kinase domain in the interval F4–W280. The Proton acceptor role is filled by D121. 2 disordered regions span residues E304–L332 and T369–S401. A compositionally biased stretch (polar residues) spans S384–L400. HEAT repeat units follow at residues R504–E543, L727–D765, N796–P834, S926–S964, L1025–A1063, S1105–A1143, and S1151–G1189.

The protein belongs to the protein kinase superfamily. Ser/Thr protein kinase family. APG1/unc-51/ULK1 subfamily. In terms of tissue distribution, expressed in embryonic and adult brain. In the brain, widely expressed, with highest levels in layers II/III and V of the cortex, piriform cortex, CA1-3 of hippocampus, dentate gyrus, ependymal cells lining the ventricles and choroid plexus, and in the thalamic reticular nucleus (at protein level).

The enzyme catalyses L-seryl-[protein] + ATP = O-phospho-L-seryl-[protein] + ADP + H(+). The catalysed reaction is L-threonyl-[protein] + ATP = O-phospho-L-threonyl-[protein] + ADP + H(+). May be involved in the remodeling of cytoskeletal components, such as alpha-tubulin, and in this way regulates neurite branching and elongation, as well as cell motility. This Mus musculus (Mouse) protein is Serine/threonine-protein kinase ULK4 (Ulk4).